A 979-amino-acid chain; its full sequence is Glycine dehydrogenase (decarboxylating) (979 aa).

At K726 the chain carries N6-(pyridoxal phosphate)lysine.

This sequence belongs to the GcvP family. In terms of assembly, the glycine cleavage system is composed of four proteins: P, T, L and H. Requires pyridoxal 5'-phosphate as cofactor.

The enzyme catalyses N(6)-[(R)-lipoyl]-L-lysyl-[glycine-cleavage complex H protein] + glycine + H(+) = N(6)-[(R)-S(8)-aminomethyldihydrolipoyl]-L-lysyl-[glycine-cleavage complex H protein] + CO2. The glycine cleavage system catalyzes the degradation of glycine. The P protein binds the alpha-amino group of glycine through its pyridoxal phosphate cofactor; CO(2) is released and the remaining methylamine moiety is then transferred to the lipoamide cofactor of the H protein. In Ralstonia pickettii (strain 12J), this protein is Glycine dehydrogenase (decarboxylating).